The chain runs to 452 residues: GTPase Der (452 aa).

EngA-type G domains follow at residues 4–169 and 177–352; these read PIVA…PSPD and INVS…EEHR. GTP contacts are provided by residues 10–17, 57–61, 120–123, 183–190, 230–234, and 295–298; these read GRPNVGKS, DTGGL, NKCE, DTAGI, and NKWD. Residues 353-438 form the KH-like domain; that stretch reads RRVNTSVVNE…PIRLLWRGKK (86 aa).

The protein belongs to the TRAFAC class TrmE-Era-EngA-EngB-Septin-like GTPase superfamily. EngA (Der) GTPase family. In terms of assembly, associates with the 50S ribosomal subunit.

GTPase that plays an essential role in the late steps of ribosome biogenesis. The polypeptide is GTPase Der (Crocosphaera subtropica (strain ATCC 51142 / BH68) (Cyanothece sp. (strain ATCC 51142))).